The primary structure comprises 1026 residues: uncharacterized protein (1026 aa).

4 WD repeats span residues 14 to 53, 62 to 104, 148 to 187, and 937 to 977; these read LLDE…HFTL, HSVS…RRAT, GHED…LTFK, and NAEC…VKFL.

It is found in the cytoplasm. The protein localises to the nucleus. This is an uncharacterized protein from Schizosaccharomyces pombe (strain 972 / ATCC 24843) (Fission yeast).